Reading from the N-terminus, the 268-residue chain is MPKVIQSSMSDYRSVPYNQTPKSASERKRRNITNELINECKTIVQKSEEEHISQEVVLFRIVKLVTGVNLESNFSSNDLSESTRRKFDTESERRKVKTEREKIRRKKQDDCYAELKFFILNKQMGSYEQRLKLERITILEIIIDYIKHNSDLLYPETIPQILPLLAGKSTATCENKENEKPKTRMEVKDLFPRLTFQEVQESPTSTSPLLTFPCIPMIPTTQFNVLSNYNTVPSIFSAPLRFILPSLQILTPETSDEEENEETLDIIN.

Residues methionine 1–serine 23 show a composition bias toward polar residues. A disordered region spans residues methionine 1–arginine 29. Residues glutamate 92–arginine 105 form a basic motif region. One can recognise a bHLH domain in the interval glutamate 92 to asparagine 149. The interval lysine 106–asparagine 149 is helix-loop-helix motif.

It localises to the nucleus. Probable transcription factor. Modulates lifespan and also recovery from the developmentally arrested larval state known as dauer, perhaps acting upstream of phosphatase PTEN/daf-18. Regulates expression of genes involved in cell division, cell-cycle regulation, and sexual reproduction, including daf-18. This Caenorhabditis elegans protein is Helix-loop-helix protein 25.